The sequence spans 291 residues: Orotidine 5'-phosphate decarboxylase (291 aa).

Lys-97 serves as the catalytic Proton donor.

Belongs to the OMP decarboxylase family. Type 2 subfamily.

It catalyses the reaction orotidine 5'-phosphate + H(+) = UMP + CO2. The protein operates within pyrimidine metabolism; UMP biosynthesis via de novo pathway; UMP from orotate: step 2/2. This is Orotidine 5'-phosphate decarboxylase from Clostridium kluyveri (strain ATCC 8527 / DSM 555 / NBRC 12016 / NCIMB 10680 / K1).